Consider the following 517-residue polypeptide: Bifunctional purine biosynthesis protein PurH (517 aa).

The 151-residue stretch at 1-151 folds into the MGS-like domain; the sequence is MTQERKIKRA…KNFAHVAVLC (151 aa).

The protein belongs to the PurH family.

It carries out the reaction (6R)-10-formyltetrahydrofolate + 5-amino-1-(5-phospho-beta-D-ribosyl)imidazole-4-carboxamide = 5-formamido-1-(5-phospho-D-ribosyl)imidazole-4-carboxamide + (6S)-5,6,7,8-tetrahydrofolate. The enzyme catalyses IMP + H2O = 5-formamido-1-(5-phospho-D-ribosyl)imidazole-4-carboxamide. It functions in the pathway purine metabolism; IMP biosynthesis via de novo pathway; 5-formamido-1-(5-phospho-D-ribosyl)imidazole-4-carboxamide from 5-amino-1-(5-phospho-D-ribosyl)imidazole-4-carboxamide (10-formyl THF route): step 1/1. The protein operates within purine metabolism; IMP biosynthesis via de novo pathway; IMP from 5-formamido-1-(5-phospho-D-ribosyl)imidazole-4-carboxamide: step 1/1. This chain is Bifunctional purine biosynthesis protein PurH, found in Elusimicrobium minutum (strain Pei191).